Reading from the N-terminus, the 291-residue chain is ATP synthase gamma chain (291 aa).

It belongs to the ATPase gamma chain family. F-type ATPases have 2 components, CF(1) - the catalytic core - and CF(0) - the membrane proton channel. CF(1) has five subunits: alpha(3), beta(3), gamma(1), delta(1), epsilon(1). CF(0) has three main subunits: a, b and c.

It is found in the cell membrane. Produces ATP from ADP in the presence of a proton gradient across the membrane. The gamma chain is believed to be important in regulating ATPase activity and the flow of protons through the CF(0) complex. The polypeptide is ATP synthase gamma chain (Streptococcus equinus (Streptococcus bovis)).